The primary structure comprises 219 residues: Small ribosomal subunit protein uS3 (219 aa).

In terms of domain architecture, KH type-2 spans 39-108 (IKEFIKKNYF…KVTVKVQEIK (70 aa)).

It belongs to the universal ribosomal protein uS3 family. Part of the 30S ribosomal subunit. Forms a tight complex with proteins S10 and S14.

Its function is as follows. Binds the lower part of the 30S subunit head. Binds mRNA in the 70S ribosome, positioning it for translation. The polypeptide is Small ribosomal subunit protein uS3 (Fusobacterium nucleatum subsp. nucleatum (strain ATCC 25586 / DSM 15643 / BCRC 10681 / CIP 101130 / JCM 8532 / KCTC 2640 / LMG 13131 / VPI 4355)).